We begin with the raw amino-acid sequence, 701 residues long: Kinesin-like protein KIN-10C (701 aa).

The region spanning 8-318 is the Kinesin motor domain; sequence VVRVVARVKP…LNLASRICLG (311 aa). 94 to 101 serves as a coordination point for ATP; that stretch reads GARNSGKT.

The protein belongs to the TRAFAC class myosin-kinesin ATPase superfamily. Kinesin family. KIN-10 subfamily.

This Arabidopsis thaliana (Mouse-ear cress) protein is Kinesin-like protein KIN-10C.